The following is a 352-amino-acid chain: Heavy metal-associated isoprenylated plant protein 36 (352 aa).

Residues 29-92 (YTTWVLRVSI…KIMKAGRHAE (64 aa)) enclose the HMA domain. The a metal cation site is built by Cys-40 and Cys-43. Disordered stretches follow at residues 96 to 150 (TSME…GNFD), 162 to 211 (QLQP…GPPE), and 229 to 252 (PHLH…RHHP). Residues 97–107 (SMENNINNDCN) are compositionally biased toward polar residues. Positions 118 to 128 (ETSGDEDDDEN) are enriched in acidic residues. Over residues 133 to 148 (NGGGDVGGGGGGGGGN) the composition is skewed to gly residues. The span at 172 to 183 (KKKKKKKKKKKS) shows a compositional bias: basic residues. The span at 192–203 (EGGGGGGGGGGP) shows a compositional bias: gly residues. Position 349 is a cysteine methyl ester (Cys-349). Cys-349 carries S-farnesyl cysteine lipidation. Residues 350 to 352 (CVM) constitute a propeptide, removed in mature form.

This sequence belongs to the HIPP family.

Its function is as follows. Heavy-metal-binding protein. This chain is Heavy metal-associated isoprenylated plant protein 36, found in Arabidopsis thaliana (Mouse-ear cress).